We begin with the raw amino-acid sequence, 1462 residues long: Copper-transporting ATPase 2 (1462 aa).

The disordered stretch occupies residues 1–23; the sequence is MDPRKNLASVGTMPEQERQVTAK. Topologically, residues 1 to 655 are cytoplasmic; the sequence is MDPRKNLASV…KTEIKQWKKS (655 aa). HMA domains are found at residues 68–134, 153–219, 267–333, and 361–427; these read ATDV…FEAS, AVVK…FEAA, ATLP…PGHF, and RTAV…FEVS. Cysteine 79, cysteine 82, cysteine 164, cysteine 167, cysteine 278, and cysteine 281 together coordinate Cu(+). Positions 333–361 are disordered; the sequence is FKVSLPDGVEENEPQSGSSQRHQEQGPGR. Cysteine 372 provides a ligand contact to Cu(+). The interval 460-487 is disordered; the sequence is KMAPDTRGLPTHQGPGHSSETPSSPGAT. Residues 475 to 487 are compositionally biased toward polar residues; it reads GHSSETPSSPGAT. Residues serine 478 and serine 483 each carry the phosphoserine modification. HMA domains are found at residues 490–556 and 566–632; these read QKCF…FEAS and GDIE…FHAS. Positions 501, 504, 577, and 580 each coordinate Cu(+). The chain crosses the membrane as a helical span at residues 656–677; the sequence is FLCSLVFGIPVMGLMVYMLIPS. Residues 678–699 lie on the Extracellular side of the membrane; it reads STPQETMVLDHNIIPGLSVLNL. Residues 700–719 form a helical membrane-spanning segment; the sequence is IFFILCTFVQFLGGWYFYVQ. Residues 720-726 lie on the Cytoplasmic side of the membrane; the sequence is AYKSLRH. The helical transmembrane segment at 727–747 threads the bilayer; that stretch reads RSANMDVLIVLATTIAYAYSL. Topologically, residues 748 to 766 are extracellular; that stretch reads VILVVAVAEKAEKSPVTFF. A helical membrane pass occupies residues 767–787; sequence DTPPMLFVFIALGRWLEHVAK. Residues 788–921 lie on the Cytoplasmic side of the membrane; it reads SKTSEALAKL…KAPIQQLADR (134 aa). Residues 922–944 traverse the membrane as a helical segment; sequence FSGYFVPFIIIISTLTLVVWIVI. Residues 945-974 are Extracellular-facing; that stretch reads GFVDFGVVQKYFPSPSKHISQTEVIIRFAF. A helical membrane pass occupies residues 975 to 996; it reads QTSITVLCIACPCSLGLATPTA. Residues 997-1319 are Cytoplasmic-facing; the sequence is VMVGTGVAAQ…LSKRTVRRIR (323 aa). Catalysis depends on aspartate 1029, which acts as the 4-aspartylphosphate intermediate. Residues aspartate 1264 and aspartate 1268 each coordinate Mg(2+). A helical transmembrane segment spans residues 1320-1337; sequence VNLVLALIYNMVGIPIAA. Residues 1338-1348 lie on the Extracellular side of the membrane; it reads GVFMPIGIVLQ. A helical membrane pass occupies residues 1349-1368; sequence PWMGSAAMAASSVSVVLSSL. The Cytoplasmic segment spans residues 1369–1462; that stretch reads QLKCYRKPDL…LSDRDEEQCI (94 aa). Phosphoserine is present on residues serine 1395 and serine 1454.

The protein belongs to the cation transport ATPase (P-type) (TC 3.A.3) family. Type IB subfamily. Monomer. Interacts with COMMD1/MURR1. Interacts with DCTN4, in a copper-dependent manner. Interacts with ATOX1. Interacts (via C-terminus) with ZBTB16/PLZF. Detected in liver and kidney.

Its subcellular location is the golgi apparatus. It localises to the trans-Golgi network membrane. The protein localises to the late endosome. It catalyses the reaction Cu(+)(in) + ATP + H2O = Cu(+)(out) + ADP + phosphate + H(+). Functionally, copper ion transmembrane transporter involved in the export of copper out of the cells, such as the efflux of hepatic copper into the bile. The chain is Copper-transporting ATPase 2 (Atp7b) from Mus musculus (Mouse).